A 511-amino-acid polypeptide reads, in one-letter code: Maturase K (511 aa).

Belongs to the intron maturase 2 family. MatK subfamily.

It is found in the plastid. The protein resides in the chloroplast. In terms of biological role, usually encoded in the trnK tRNA gene intron. Probably assists in splicing its own and other chloroplast group II introns. The sequence is that of Maturase K from Nandina domestica (Heavenly bamboo).